The following is a 461-amino-acid chain: ATP synthase subunit beta 2 (461 aa).

151-158 serves as a coordination point for ATP; sequence GGAGVGKT.

This sequence belongs to the ATPase alpha/beta chains family. As to quaternary structure, F-type ATPases have 2 components, CF(1) - the catalytic core - and CF(0) - the membrane proton channel. CF(1) has five subunits: alpha(3), beta(3), gamma(1), delta(1), epsilon(1). CF(0) has three main subunits: a(1), b(2) and c(9-12). The alpha and beta chains form an alternating ring which encloses part of the gamma chain. CF(1) is attached to CF(0) by a central stalk formed by the gamma and epsilon chains, while a peripheral stalk is formed by the delta and b chains.

It localises to the cell inner membrane. It catalyses the reaction ATP + H2O + 4 H(+)(in) = ADP + phosphate + 5 H(+)(out). In terms of biological role, produces ATP from ADP in the presence of a proton gradient across the membrane. The catalytic sites are hosted primarily by the beta subunits. This chain is ATP synthase subunit beta 2, found in Vibrio campbellii (strain ATCC BAA-1116).